The following is a 183-amino-acid chain: Probable RNA 2'-phosphotransferase (183 aa).

The protein belongs to the KptA/TPT1 family.

Its function is as follows. Removes the 2'-phosphate from RNA via an intermediate in which the phosphate is ADP-ribosylated by NAD followed by a presumed transesterification to release the RNA and generate ADP-ribose 1''-2''-cyclic phosphate (APPR&gt;P). May function as an ADP-ribosylase. The chain is Probable RNA 2'-phosphotransferase from Pyrococcus furiosus (strain ATCC 43587 / DSM 3638 / JCM 8422 / Vc1).